The primary structure comprises 394 residues: Flavohemoprotein (394 aa).

The 138-residue stretch at 1–138 (MLTQEHINII…LAQVFIDREG (138 aa)) folds into the Globin domain. Position 85 (His-85) interacts with heme b. Active-site charge relay system residues include Tyr-95 and Glu-137. Residues 149–394 (GGWRDGRTFV…VFGPHAQLAA (246 aa)) are reductase. Positions 152–262 (RDGRTFVVRE…YAPAGDFFYV (111 aa)) constitute an FAD-binding FR-type domain. Residues Tyr-190 and 206–209 (RQYS) contribute to the FAD site. 274–279 (GVGATP) is an NADP(+) binding site. 385–388 (VFGP) lines the FAD pocket.

Belongs to the globin family. Two-domain flavohemoproteins subfamily. This sequence in the C-terminal section; belongs to the flavoprotein pyridine nucleotide cytochrome reductase family. Requires heme b as cofactor. It depends on FAD as a cofactor.

The enzyme catalyses 2 nitric oxide + NADPH + 2 O2 = 2 nitrate + NADP(+) + H(+). It carries out the reaction 2 nitric oxide + NADH + 2 O2 = 2 nitrate + NAD(+) + H(+). Functionally, is involved in NO detoxification in an aerobic process, termed nitric oxide dioxygenase (NOD) reaction that utilizes O(2) and NAD(P)H to convert NO to nitrate, which protects the bacterium from various noxious nitrogen compounds. Therefore, plays a central role in the inducible response to nitrosative stress. This Vibrio cholerae serotype O1 (strain ATCC 39315 / El Tor Inaba N16961) protein is Flavohemoprotein (hmp).